The chain runs to 62 residues: Toxin Tb2 (62 aa).

An LCN-type CS-alpha/beta domain is found at 1–62 (KEGYAMDHEG…KVWDYATNKC (62 aa)). 4 disulfide bridges follow: C11–C62, C15–C38, C23–C43, and C27–C45. Position 62 is a cysteine amide (C62).

Belongs to the long (4 C-C) scorpion toxin superfamily. Sodium channel inhibitor family. Beta subfamily. Expressed by the venom gland.

The protein localises to the secreted. Beta toxins bind voltage-independently at site-4 of sodium channels (Nav) and shift the voltage of activation toward more negative potentials thereby affecting sodium channel activation and promoting spontaneous and repetitive firing. This toxin is active on mammals. The sequence is that of Toxin Tb2 from Tityus bahiensis (Brazilian scorpion).